The primary structure comprises 221 residues: Probable transaldolase (221 aa).

Lysine 83 functions as the Schiff-base intermediate with substrate in the catalytic mechanism.

It belongs to the transaldolase family. Type 3B subfamily.

Its subcellular location is the cytoplasm. The catalysed reaction is D-sedoheptulose 7-phosphate + D-glyceraldehyde 3-phosphate = D-erythrose 4-phosphate + beta-D-fructose 6-phosphate. It participates in carbohydrate degradation; pentose phosphate pathway; D-glyceraldehyde 3-phosphate and beta-D-fructose 6-phosphate from D-ribose 5-phosphate and D-xylulose 5-phosphate (non-oxidative stage): step 2/3. Its function is as follows. Transaldolase is important for the balance of metabolites in the pentose-phosphate pathway. The protein is Probable transaldolase of Petrotoga mobilis (strain DSM 10674 / SJ95).